We begin with the raw amino-acid sequence, 360 residues long: Phenylalanine--tRNA ligase alpha subunit (360 aa).

Residue Glu-260 coordinates Mg(2+).

It belongs to the class-II aminoacyl-tRNA synthetase family. Phe-tRNA synthetase alpha subunit type 1 subfamily. As to quaternary structure, tetramer of two alpha and two beta subunits. Mg(2+) is required as a cofactor.

The protein localises to the cytoplasm. It carries out the reaction tRNA(Phe) + L-phenylalanine + ATP = L-phenylalanyl-tRNA(Phe) + AMP + diphosphate + H(+). The chain is Phenylalanine--tRNA ligase alpha subunit from Cereibacter sphaeroides (strain ATCC 17029 / ATH 2.4.9) (Rhodobacter sphaeroides).